Reading from the N-terminus, the 282-residue chain is MIRIGAHMPIGGGFKRVPKETYEIGGNAFQIFPHNPRQWKANLPKEEDIKLFKEGIKKYKIDPEAMLCHSGYLINIASPNIETWNKSLELLILEMKICSTLGIKYLNIHPGSHLKSGVENGINQILKALNTAMEKEKNTFILLENVTKKGGNIGSTLEELKLIIDKAKFPDRLGITIDTCHAFDAGYDITNKEKLNEFLNKIDKYFSLEKLKFIHLNDSKNDLGSNKDRHENIGKGKIGSEGLKVFISHPLIQKIPWVLETPGDNDVHKKDIQEVLKILEVK.

Zn(2+) is bound by residues histidine 69, histidine 109, glutamate 144, aspartate 178, histidine 181, histidine 215, aspartate 228, histidine 230, and glutamate 260.

This sequence belongs to the AP endonuclease 2 family. Requires Zn(2+) as cofactor.

It catalyses the reaction Endonucleolytic cleavage to 5'-phosphooligonucleotide end-products.. Functionally, endonuclease IV plays a role in DNA repair. It cleaves phosphodiester bonds at apurinic or apyrimidinic (AP) sites, generating a 3'-hydroxyl group and a 5'-terminal sugar phosphate. The protein is Probable endonuclease 4 of Thermosipho africanus (strain TCF52B).